The following is a 495-amino-acid chain: 3-octaprenyl-4-hydroxybenzoate carboxy-lyase (495 aa).

Residue Asn172 participates in Mn(2+) binding. Prenylated FMN-binding positions include 175 to 177, 189 to 191, and 194 to 195; these read IYR, RWL, and RG. Glu238 lines the Mn(2+) pocket. Asp287 (proton donor) is an active-site residue.

This sequence belongs to the UbiD family. Homohexamer. Requires prenylated FMN as cofactor. It depends on Mn(2+) as a cofactor.

It is found in the cell membrane. It carries out the reaction a 4-hydroxy-3-(all-trans-polyprenyl)benzoate + H(+) = a 2-(all-trans-polyprenyl)phenol + CO2. Its pathway is cofactor biosynthesis; ubiquinone biosynthesis. Its function is as follows. Catalyzes the decarboxylation of 3-octaprenyl-4-hydroxy benzoate to 2-octaprenylphenol, an intermediate step in ubiquinone biosynthesis. The sequence is that of 3-octaprenyl-4-hydroxybenzoate carboxy-lyase from Yersinia enterocolitica serotype O:8 / biotype 1B (strain NCTC 13174 / 8081).